Here is a 208-residue protein sequence, read N- to C-terminus: NAD(P)H dehydrogenase (quinone) (208 aa).

In terms of domain architecture, Flavodoxin-like spans 4-199; that stretch reads VNVIFHSIHG…AMARYQGRHV (196 aa). Residues 10–15 and 87–89 each bind FMN; these read SIHGHT and TRY. Trp107 is a binding site for substrate. FMN contacts are provided by residues 122 to 128 and His143; that span reads SSGTQHG.

The protein belongs to the WrbA family. FMN serves as cofactor.

It catalyses the reaction a quinone + NADH + H(+) = a quinol + NAD(+). The catalysed reaction is a quinone + NADPH + H(+) = a quinol + NADP(+). The polypeptide is NAD(P)H dehydrogenase (quinone) (Methanosarcina barkeri (strain Fusaro / DSM 804)).